The following is a 644-amino-acid chain: SURP and G-patch domain-containing protein 1 (644 aa).

A compositionally biased stretch (basic and acidic residues) spans 44-54; sequence REIEARMEQKA. 2 disordered regions span residues 44–74 and 98–122; these read REIE…ADAQ and AQAS…KRPL. A Phosphothreonine modification is found at Thr-128. One copy of the SURP motif 1 repeat lies at 188-230; that stretch reads VIEKLARFVAEGGPELEKVAMEDYKDNPAFTFLHDKNSREFLY. Residue Ser-253 is modified to Phosphoserine. Residues 263–306 form an SURP motif 2 repeat; it reads LAEKLARFIADGGPEVETIALQNNRENQAFSFLYDPNSQGYRYY. Disordered stretches follow at residues 316 to 342 and 360 to 412; these read AKAG…PEAL and PAVN…PSPL. Ser-323 carries the phosphoserine modification. Positions 360–369 are enriched in pro residues; the sequence is PAVNPTPSIP. A Nuclear localization signal motif is present at residues 379–385; sequence KRKRKSR. Phosphoserine occurs at positions 408, 410, 413, and 484. Residues 561-608 enclose the G-patch domain; the sequence is VENIGYQMLMKMGWKEGEGLGTEGQGIKNPVNKGATTIDGAGFGIDRP.

In terms of assembly, component of the spliceosome.

The protein resides in the nucleus. Functionally, plays a role in pre-mRNA splicing. This Rattus norvegicus (Rat) protein is SURP and G-patch domain-containing protein 1 (Sugp1).